Consider the following 210-residue polypeptide: Ribosomal RNA large subunit methyltransferase E (210 aa).

Residues G60, W62, D80, D96, and D122 each coordinate S-adenosyl-L-methionine. K162 functions as the Proton acceptor in the catalytic mechanism.

This sequence belongs to the class I-like SAM-binding methyltransferase superfamily. RNA methyltransferase RlmE family.

Its subcellular location is the cytoplasm. It catalyses the reaction uridine(2552) in 23S rRNA + S-adenosyl-L-methionine = 2'-O-methyluridine(2552) in 23S rRNA + S-adenosyl-L-homocysteine + H(+). Specifically methylates the uridine in position 2552 of 23S rRNA at the 2'-O position of the ribose in the fully assembled 50S ribosomal subunit. The sequence is that of Ribosomal RNA large subunit methyltransferase E from Dichelobacter nodosus (strain VCS1703A).